Reading from the N-terminus, the 482-residue chain is tRNA sulfurtransferase (482 aa).

One can recognise a THUMP domain in the interval 61-165; sequence LAIRDALTRI…DDRLLLIKGR (105 aa). ATP contacts are provided by residues 183 to 184, lysine 265, glycine 287, and glutamine 296; that span reads LI. Cysteine 344 and cysteine 456 are oxidised to a cystine. A Rhodanese domain is found at 404 to 482; it reads FGPNDVILDI…GFENVKAYRP (79 aa). Cysteine 456 (cysteine persulfide intermediate) is an active-site residue.

Belongs to the ThiI family.

It localises to the cytoplasm. It catalyses the reaction [ThiI sulfur-carrier protein]-S-sulfanyl-L-cysteine + a uridine in tRNA + 2 reduced [2Fe-2S]-[ferredoxin] + ATP + H(+) = [ThiI sulfur-carrier protein]-L-cysteine + a 4-thiouridine in tRNA + 2 oxidized [2Fe-2S]-[ferredoxin] + AMP + diphosphate. The enzyme catalyses [ThiS sulfur-carrier protein]-C-terminal Gly-Gly-AMP + S-sulfanyl-L-cysteinyl-[cysteine desulfurase] + AH2 = [ThiS sulfur-carrier protein]-C-terminal-Gly-aminoethanethioate + L-cysteinyl-[cysteine desulfurase] + A + AMP + 2 H(+). It functions in the pathway cofactor biosynthesis; thiamine diphosphate biosynthesis. Catalyzes the ATP-dependent transfer of a sulfur to tRNA to produce 4-thiouridine in position 8 of tRNAs, which functions as a near-UV photosensor. Also catalyzes the transfer of sulfur to the sulfur carrier protein ThiS, forming ThiS-thiocarboxylate. This is a step in the synthesis of thiazole, in the thiamine biosynthesis pathway. The sulfur is donated as persulfide by IscS. The polypeptide is tRNA sulfurtransferase (Salmonella gallinarum (strain 287/91 / NCTC 13346)).